The sequence spans 117 residues: NADH-ubiquinone oxidoreductase chain 3 (117 aa).

3 helical membrane passes run Ile4 to Ile24, Phe57 to Leu77, and Trp88 to Trp108.

Belongs to the complex I subunit 3 family.

It localises to the mitochondrion membrane. It catalyses the reaction a ubiquinone + NADH + 5 H(+)(in) = a ubiquinol + NAD(+) + 4 H(+)(out). Core subunit of the mitochondrial membrane respiratory chain NADH dehydrogenase (Complex I) that is believed to belong to the minimal assembly required for catalysis. Complex I functions in the transfer of electrons from NADH to the respiratory chain. The immediate electron acceptor for the enzyme is believed to be ubiquinone. This is NADH-ubiquinone oxidoreductase chain 3 (ND3) from Heterololigo bleekeri (Spear squid).